Consider the following 512-residue polypeptide: Ribose import ATP-binding protein RbsA 2 (512 aa).

ABC transporter domains are found at residues 22–258 (LEMR…VGRD) and 263–512 (FPKV…TGNA). An ATP-binding site is contributed by 54–61 (GENGAGKS).

The protein belongs to the ABC transporter superfamily. Ribose importer (TC 3.A.1.2.1) family. In terms of assembly, the complex is composed of an ATP-binding protein (RbsA), two transmembrane proteins (RbsC) and a solute-binding protein (RbsB).

The protein localises to the cell inner membrane. It carries out the reaction D-ribose(out) + ATP + H2O = D-ribose(in) + ADP + phosphate + H(+). Functionally, part of the ABC transporter complex RbsABC involved in ribose import. Responsible for energy coupling to the transport system. In Rhizobium johnstonii (strain DSM 114642 / LMG 32736 / 3841) (Rhizobium leguminosarum bv. viciae), this protein is Ribose import ATP-binding protein RbsA 2.